The sequence spans 569 residues: Sulfite reductase [NADPH] hemoprotein beta-component (569 aa).

[4Fe-4S] cluster-binding residues include Cys433, Cys439, Cys478, and Cys482. A siroheme-binding site is contributed by Cys482.

Belongs to the nitrite and sulfite reductase 4Fe-4S domain family. In terms of assembly, alpha(8)-beta(8). The alpha component is a flavoprotein, the beta component is a hemoprotein. Siroheme serves as cofactor. Requires [4Fe-4S] cluster as cofactor.

It carries out the reaction hydrogen sulfide + 3 NADP(+) + 3 H2O = sulfite + 3 NADPH + 4 H(+). It participates in sulfur metabolism; hydrogen sulfide biosynthesis; hydrogen sulfide from sulfite (NADPH route): step 1/1. Component of the sulfite reductase complex that catalyzes the 6-electron reduction of sulfite to sulfide. This is one of several activities required for the biosynthesis of L-cysteine from sulfate. The polypeptide is Sulfite reductase [NADPH] hemoprotein beta-component (Pseudoalteromonas atlantica (strain T6c / ATCC BAA-1087)).